Here is a 403-residue protein sequence, read N- to C-terminus: Argininosuccinate synthase (403 aa).

ATP contacts are provided by residues 13–21 (AYSGGLDTS) and Ala40. The L-citrulline site is built by Tyr92 and Ser97. Position 122 (Gly122) interacts with ATP. L-aspartate contacts are provided by Thr124, Asn128, and Asp129. An L-citrulline-binding site is contributed by Asn128. 5 residues coordinate L-citrulline: Arg132, Ser181, Ser190, Glu266, and Tyr278.

This sequence belongs to the argininosuccinate synthase family. Type 1 subfamily. In terms of assembly, homotetramer.

It localises to the cytoplasm. The catalysed reaction is L-citrulline + L-aspartate + ATP = 2-(N(omega)-L-arginino)succinate + AMP + diphosphate + H(+). It functions in the pathway amino-acid biosynthesis; L-arginine biosynthesis; L-arginine from L-ornithine and carbamoyl phosphate: step 2/3. This Aliivibrio fischeri (strain MJ11) (Vibrio fischeri) protein is Argininosuccinate synthase.